The chain runs to 123 residues: MRIQSLLLLGALLAVGSQLPAVFGRKKGEKWGGCPADDGPCLLSVPDQCVEDSQCPLTRKCCYRACFRQCIPRVSVKPGSCPQDQLRCLSPMNHLCHKDSDCSGKKRCCHSACGRDCRDPARG.

An N-terminal signal peptide occupies residues 1–24 (MRIQSLLLLGALLAVGSQLPAVFG). 2 WAP domains span residues 27-73 (KGEK…CIPR) and 74-121 (VSVK…RDPA). Disulfide bonds link Cys-34–Cys-62, Cys-41–Cys-66, Cys-49–Cys-61, Cys-55–Cys-70, Cys-81–Cys-109, Cys-88–Cys-113, Cys-96–Cys-108, and Cys-102–Cys-117.

It localises to the secreted. In terms of biological role, putative acid-stable proteinase inhibitor. This is WAP four-disulfide core domain protein 5 (WFDC5) from Macaca mulatta (Rhesus macaque).